Reading from the N-terminus, the 89-residue chain is Small ribosomal subunit protein bS20 (89 aa).

The interval 1–21 is disordered; it reads MANSAQAKKRARQNVKARKHN. Basic residues predominate over residues 7 to 21; the sequence is AKKRARQNVKARKHN.

Belongs to the bacterial ribosomal protein bS20 family.

Functionally, binds directly to 16S ribosomal RNA. This is Small ribosomal subunit protein bS20 from Acinetobacter baylyi (strain ATCC 33305 / BD413 / ADP1).